The primary structure comprises 2110 residues: Protein Ycf2 (2110 aa).

Residue 1336–1343 coordinates ATP; that stretch reads GSIGTGRS. Residues 1852–1876 form a disordered region; it reads EEEAELQDEEAELQDEGAGRKDEEA. The segment covering 1854 to 1866 has biased composition (acidic residues); the sequence is EAELQDEEAELQD.

This sequence belongs to the Ycf2 family.

The protein resides in the plastid. The protein localises to the chloroplast stroma. Probable ATPase of unknown function. Its presence in a non-photosynthetic plant (Epifagus virginiana) and experiments in tobacco indicate that it has an essential function which is probably not related to photosynthesis. This is Protein Ycf2 (ycf2-A) from Pelargonium hortorum (Common geranium).